Consider the following 76-residue polypeptide: DNA-directed RNA polymerase subunit epsilon (76 aa).

It belongs to the RNA polymerase subunit epsilon family. As to quaternary structure, RNAP is composed of a core of 2 alpha, a beta and a beta' subunit. The core is associated with a delta subunit, and at least one of epsilon or omega. When a sigma factor is associated with the core the holoenzyme is formed, which can initiate transcription.

It carries out the reaction RNA(n) + a ribonucleoside 5'-triphosphate = RNA(n+1) + diphosphate. Functionally, a non-essential component of RNA polymerase (RNAP). The chain is DNA-directed RNA polymerase subunit epsilon from Streptococcus pyogenes serotype M1.